A 358-amino-acid chain; its full sequence is Photosystem II protein D1 2 (358 aa).

3 helical membrane-spanning segments follow: residues 28–45 (YVGW…AATI), 117–132 (HFLI…QWEL), and 141–155 (WICV…AAMA). H117 provides a ligand contact to chlorophyll a. Pheophytin a is bound at residue Y125. Residues D169 and E188 each contribute to the [CaMn4O5] cluster site. A helical membrane pass occupies residues 196-217 (FHMLGVAGVFGGSLFSAMHGSL). H197 provides a ligand contact to chlorophyll a. A quinone contacts are provided by residues H214 and 263–264 (SF). H214 serves as a coordination point for Fe cation. A Fe cation-binding site is contributed by H271. The chain crosses the membrane as a helical span at residues 273-287 (FLGAWPVVGIWFTSM). 4 residues coordinate [CaMn4O5] cluster: H331, E332, D341, and A343. Positions 344-358 (TVESTPVALQAPAIG) are excised as a propeptide.

This sequence belongs to the reaction center PufL/M/PsbA/D family. PSII is composed of 1 copy each of membrane proteins PsbA, PsbB, PsbC, PsbD, PsbE, PsbF, PsbH, PsbI, PsbJ, PsbK, PsbL, PsbM, PsbT, PsbX, PsbY, PsbZ, Psb30/Ycf12, peripheral proteins PsbO, CyanoQ (PsbQ), PsbU, PsbV and a large number of cofactors. It forms dimeric complexes. The D1/D2 heterodimer binds P680, chlorophylls that are the primary electron donor of PSII, and subsequent electron acceptors. It shares a non-heme iron and each subunit binds pheophytin, quinone, additional chlorophylls, carotenoids and lipids. D1 provides most of the ligands for the Mn4-Ca-O5 cluster of the oxygen-evolving complex (OEC). There is also a Cl(-1) ion associated with D1 and D2, which is required for oxygen evolution. The PSII complex binds additional chlorophylls, carotenoids and specific lipids. serves as cofactor. Post-translationally, tyr-160 forms a radical intermediate that is referred to as redox-active TyrZ, YZ or Y-Z. In terms of processing, C-terminally processed by CtpA; processing is essential to allow assembly of the oxygen-evolving complex and thus photosynthetic growth.

Its subcellular location is the cellular thylakoid membrane. The enzyme catalyses 2 a plastoquinone + 4 hnu + 2 H2O = 2 a plastoquinol + O2. Functionally, photosystem II (PSII) is a light-driven water:plastoquinone oxidoreductase that uses light energy to abstract electrons from H(2)O, generating O(2) and a proton gradient subsequently used for ATP formation. It consists of a core antenna complex that captures photons, and an electron transfer chain that converts photonic excitation into a charge separation. The D1/D2 (PsbA/PsbD) reaction center heterodimer binds P680, the primary electron donor of PSII as well as several subsequent electron acceptors. The polypeptide is Photosystem II protein D1 2 (Parasynechococcus marenigrum (strain WH8102)).